Consider the following 654-residue polypeptide: Collagen alpha-1(XXV) chain (654 aa).

Residues 1 to 26 (MLLKKHAGKGGGREPRSEDPTPAEQH) are disordered. Residues 1–33 (MLLKKHAGKGGGREPRSEDPTPAEQHCARTMPP) lie on the Cytoplasmic side of the membrane. A helical; Signal-anchor for type II membrane protein transmembrane segment spans residues 34–54 (CAVLAALLSVVAVVSCLYLGV). Topologically, residues 55–654 (KTNDLQARIA…GLPMPGCWQK (600 aa)) are extracellular. A Pyrrolidone carboxylic acid (Glu) modification is found at Glu-113. A disordered region spans residues 116–168 (SECNCPAGPPGKRGKRGRRGESGPPGQPGPQGPPGPKGDKGEQGDQGPRMVFP). The 44-residue stretch at 121–164 (PAGPPGKRGKRGRRGESGPPGQPGPQGPPGPKGDKGEQGDQGPR) folds into the Collagen-like 1 domain. Pro residues predominate over residues 140–151 (PGQPGPQGPPGP). The tract at residues 181–188 (LIKRRLIK) is interaction with amyloid-beta peptide. 2 disordered regions span residues 189–426 (GDQG…QGAT) and 445–654 (LTVT…CWQK). 5 consecutive Collagen-like domains span residues 192 to 247 (GQAG…QKGS), 249 to 308 (GAPG…PGSS), 311 to 370 (GIKG…AGPP), 372 to 425 (RGER…DQGA), and 447 to 505 (VTGP…PGLP). The span at 196-208 (PPGPPGPPGPRGP) shows a compositional bias: pro residues. Residues 230-245 (PGEQGLMGPLGPPGQK) show a composition bias toward low complexity. Over residues 280–290 (EPGEQGEKGDA) the composition is skewed to basic and acidic residues. The segment covering 336-358 (LPGIKGEPGFIGPQGEPGLPGLP) has biased composition (low complexity). Composition is skewed to basic and acidic residues over residues 361 to 377 (KGERGEAGPPGRGERGE) and 398 to 407 (SKGDRGEKGD). Residues 457-466 (QGLQGPKGEQ) are compositionally biased toward low complexity. Gly residues predominate over residues 494-503 (GEKGGIGLPG). Positions 517–527 (SGMPGPQGPSI) are enriched in low complexity. The span at 528-543 (IGPPGPPGPHGPPGPM) shows a compositional bias: pro residues. Positions 571-630 (GEKGAMGEPGPRGPYGLPGKDGEPGLDGFPGPRGEKGDLGEKGEKGFRGVKGEKGEPGQP) constitute a Collagen-like 7 domain. The segment covering 603–626 (RGEKGDLGEKGEKGFRGVKGEKGE) has biased composition (basic and acidic residues).

In terms of assembly, forms homodimers and homotrimers. Binds to the fibrillized forms of amyloid-beta protein 40 (beta-APP40) and amyloid-beta protein 42 (beta-APP42). Found associated with beta-APP42 more frequently than with beta-APP40. In terms of processing, undergoes proteolytic cleavage by furin protease to yield the soluble collagen-like Alzheimer amyloid plaque component. Glycosylated. Post-translationally, hydroxylated on 11% of proline residues and 49% of lysine residues. As to expression, expressed predominantly in brain. Deposited preferentially in primitive or neuritic amyloid plaques which are typical of Alzheimer disease.

The protein resides in the membrane. Its function is as follows. Inhibits fibrillization of amyloid-beta peptide during the elongation phase. Has also been shown to assemble amyloid fibrils into protease-resistant aggregates. Binds heparin. The sequence is that of Collagen alpha-1(XXV) chain from Homo sapiens (Human).